Reading from the N-terminus, the 505-residue chain is Maturase K (505 aa).

This sequence belongs to the intron maturase 2 family. MatK subfamily.

Its subcellular location is the plastid. The protein resides in the chloroplast. Usually encoded in the trnK tRNA gene intron. Probably assists in splicing its own and other chloroplast group II introns. This chain is Maturase K, found in Barclaya longifolia (Orchid lily).